A 382-amino-acid chain; its full sequence is Mannitol-1-phosphate 5-dehydrogenase (382 aa).

4 to 15 lines the NAD(+) pocket; that stretch reads AVHFGAGNIGRG.

The protein belongs to the mannitol dehydrogenase family.

It carries out the reaction D-mannitol 1-phosphate + NAD(+) = beta-D-fructose 6-phosphate + NADH + H(+). This Vibrio vulnificus (strain YJ016) protein is Mannitol-1-phosphate 5-dehydrogenase.